The primary structure comprises 493 residues: Probable cytosol aminopeptidase (493 aa).

Mn(2+)-binding residues include Lys-260 and Asp-265. Lys-272 is a catalytic residue. Mn(2+) contacts are provided by Asp-283, Asp-342, and Glu-344. The active site involves Arg-346.

This sequence belongs to the peptidase M17 family. The cofactor is Mn(2+).

The protein localises to the cytoplasm. The enzyme catalyses Release of an N-terminal amino acid, Xaa-|-Yaa-, in which Xaa is preferably Leu, but may be other amino acids including Pro although not Arg or Lys, and Yaa may be Pro. Amino acid amides and methyl esters are also readily hydrolyzed, but rates on arylamides are exceedingly low.. The catalysed reaction is Release of an N-terminal amino acid, preferentially leucine, but not glutamic or aspartic acids.. Its function is as follows. Presumably involved in the processing and regular turnover of intracellular proteins. Catalyzes the removal of unsubstituted N-terminal amino acids from various peptides. The sequence is that of Probable cytosol aminopeptidase from Clostridium perfringens (strain 13 / Type A).